The sequence spans 194 residues: uncharacterized protein (194 aa).

Residues 1–22 (MNKVTKTAIAGLLALFAGNAAA) form the signal peptide. The cysteines at positions 38 and 78 are disulfide-linked.

This sequence belongs to the fimbrial protein family.

The protein resides in the fimbrium. Functionally, part of the yraHIJK fimbrial operon. Could contribute to adhesion to various surfaces in specific environmental niches. Increases adhesion to eukaryotic T24 bladder epithelial cells in the absence of fim operon. This is an uncharacterized protein from Escherichia coli (strain K12).